We begin with the raw amino-acid sequence, 102 residues long: NADH-quinone oxidoreductase subunit K (102 aa).

3 helical membrane passes run 5-25, 31-51, and 62-82; these read LAHY…GIFL, IILL…FVAF, and VFVF…LAIL.

Belongs to the complex I subunit 4L family. As to quaternary structure, NDH-1 is composed of 14 different subunits. Subunits NuoA, H, J, K, L, M, N constitute the membrane sector of the complex.

The protein resides in the cell inner membrane. The enzyme catalyses a quinone + NADH + 5 H(+)(in) = a quinol + NAD(+) + 4 H(+)(out). Its function is as follows. NDH-1 shuttles electrons from NADH, via FMN and iron-sulfur (Fe-S) centers, to quinones in the respiratory chain. The immediate electron acceptor for the enzyme in this species is believed to be ubiquinone. Couples the redox reaction to proton translocation (for every two electrons transferred, four hydrogen ions are translocated across the cytoplasmic membrane), and thus conserves the redox energy in a proton gradient. In Bordetella parapertussis (strain 12822 / ATCC BAA-587 / NCTC 13253), this protein is NADH-quinone oxidoreductase subunit K.